Consider the following 392-residue polypeptide: Bifunctional enzyme Fae/Hps (392 aa).

Positions 1–161 are formaldehyde-activating enzyme; the sequence is MFQIGEALMG…EESNKSTHAI (161 aa). The active-site Proton donor is the histidine 17. Aspartate 19, leucine 48, lysine 66, threonine 68, and glutamine 83 together coordinate substrate. The 3-hexulose-6-phosphate synthase stretch occupies residues 162–392; sequence MGFKVTRLWD…IDQFRVMTDF (231 aa).

The protein in the N-terminal section; belongs to the formaldehyde-activating enzyme family. This sequence in the C-terminal section; belongs to the HPS/KGPDC family. HPS subfamily.

The enzyme catalyses 5,6,7,8-tetrahydromethanopterin + formaldehyde = 5,10-methylenetetrahydromethanopterin + H2O. It catalyses the reaction D-ribulose 5-phosphate + formaldehyde = D-arabino-hex-3-ulose 6-phosphate. Its pathway is carbohydrate biosynthesis; D-ribose 5-phosphate biosynthesis. In terms of biological role, catalyzes the condensation of formaldehyde with tetrahydromethanopterin (H(4)MPT) to 5,10-methylenetetrahydromethanopterin. Functionally, catalyzes the reversible formation of ribulose-5-phosphate and formaldehyde from 3-hexulose-6-phosphate. This is Bifunctional enzyme Fae/Hps from Methanosarcina acetivorans (strain ATCC 35395 / DSM 2834 / JCM 12185 / C2A).